A 451-amino-acid polypeptide reads, in one-letter code: tRNA modification GTPase MnmE (451 aa).

(6S)-5-formyl-5,6,7,8-tetrahydrofolate is bound by residues Arg23, Glu80, and Lys119. In terms of domain architecture, TrmE-type G spans 215–372 (GIKVVLTGQP…LRTVLLKTVG (158 aa)). Asn225 lines the K(+) pocket. Residues 225 to 230 (NVGKSS), 244 to 250 (TEIPGTT), and 269 to 272 (DTAG) contribute to the GTP site. Ser229 is a binding site for Mg(2+). K(+) contacts are provided by Thr244, Ile246, and Thr249. Thr250 is a binding site for Mg(2+). Lys451 serves as a coordination point for (6S)-5-formyl-5,6,7,8-tetrahydrofolate.

It belongs to the TRAFAC class TrmE-Era-EngA-EngB-Septin-like GTPase superfamily. TrmE GTPase family. As to quaternary structure, homodimer. Heterotetramer of two MnmE and two MnmG subunits. K(+) serves as cofactor.

Its subcellular location is the cytoplasm. Exhibits a very high intrinsic GTPase hydrolysis rate. Involved in the addition of a carboxymethylaminomethyl (cmnm) group at the wobble position (U34) of certain tRNAs, forming tRNA-cmnm(5)s(2)U34. This chain is tRNA modification GTPase MnmE, found in Nitrosomonas eutropha (strain DSM 101675 / C91 / Nm57).